A 261-amino-acid polypeptide reads, in one-letter code: Flagellar L-ring protein (261 aa).

The N-terminal stretch at 1–15 (MKRLLCLLLLTTLTG) is a signal peptide. Residue C16 is the site of N-palmitoyl cysteine attachment. C16 is lipidated: S-diacylglycerol cysteine. The segment covering 121–133 (KSADAELSKKNDS) has biased composition (basic and acidic residues). Residues 121-140 (KSADAELSKKNDSSMDPLQV) are disordered.

Belongs to the FlgH family. In terms of assembly, the basal body constitutes a major portion of the flagellar organelle and consists of four rings (L,P,S, and M) mounted on a central rod.

The protein resides in the cell outer membrane. Its subcellular location is the bacterial flagellum basal body. Its function is as follows. Assembles around the rod to form the L-ring and probably protects the motor/basal body from shearing forces during rotation. The protein is Flagellar L-ring protein of Aliivibrio salmonicida (strain LFI1238) (Vibrio salmonicida (strain LFI1238)).